A 287-amino-acid chain; its full sequence is Orotidine 5'-phosphate decarboxylase (287 aa).

Catalysis depends on Lys97, which acts as the Proton donor.

The protein belongs to the OMP decarboxylase family. Type 2 subfamily.

The catalysed reaction is orotidine 5'-phosphate + H(+) = UMP + CO2. Its pathway is pyrimidine metabolism; UMP biosynthesis via de novo pathway; UMP from orotate: step 2/2. In Clostridium perfringens (strain SM101 / Type A), this protein is Orotidine 5'-phosphate decarboxylase.